Reading from the N-terminus, the 212-residue chain is Imidazole glycerol phosphate synthase subunit HisH (212 aa).

Positions 3-212 (DVAIIDYGMG…MLANFISWAP (210 aa)) constitute a Glutamine amidotransferase type-1 domain. Cysteine 82 (nucleophile) is an active-site residue. Active-site residues include histidine 192 and glutamate 194.

In terms of assembly, heterodimer of HisH and HisF.

It localises to the cytoplasm. It carries out the reaction 5-[(5-phospho-1-deoxy-D-ribulos-1-ylimino)methylamino]-1-(5-phospho-beta-D-ribosyl)imidazole-4-carboxamide + L-glutamine = D-erythro-1-(imidazol-4-yl)glycerol 3-phosphate + 5-amino-1-(5-phospho-beta-D-ribosyl)imidazole-4-carboxamide + L-glutamate + H(+). The catalysed reaction is L-glutamine + H2O = L-glutamate + NH4(+). The protein operates within amino-acid biosynthesis; L-histidine biosynthesis; L-histidine from 5-phospho-alpha-D-ribose 1-diphosphate: step 5/9. In terms of biological role, IGPS catalyzes the conversion of PRFAR and glutamine to IGP, AICAR and glutamate. The HisH subunit catalyzes the hydrolysis of glutamine to glutamate and ammonia as part of the synthesis of IGP and AICAR. The resulting ammonia molecule is channeled to the active site of HisF. The protein is Imidazole glycerol phosphate synthase subunit HisH of Aromatoleum aromaticum (strain DSM 19018 / LMG 30748 / EbN1) (Azoarcus sp. (strain EbN1)).